A 340-amino-acid chain; its full sequence is UDP-3-O-(3-hydroxymyristoyl)glucosamine N-acyltransferase (340 aa).

The Proton acceptor role is filled by His239.

Belongs to the transferase hexapeptide repeat family. LpxD subfamily. As to quaternary structure, homotrimer.

The catalysed reaction is a UDP-3-O-[(3R)-3-hydroxyacyl]-alpha-D-glucosamine + a (3R)-hydroxyacyl-[ACP] = a UDP-2-N,3-O-bis[(3R)-3-hydroxyacyl]-alpha-D-glucosamine + holo-[ACP] + H(+). It catalyses the reaction UDP-3-O-[(3R)-3-hydroxytetradecanoyl]-alpha-D-glucosamine + (3R)-hydroxytetradecanoyl-[ACP] = UDP-2-N,3-O-bis[(3R)-3-hydroxytetradecanoyl]-alpha-D-glucosamine + holo-[ACP] + H(+). It functions in the pathway glycolipid biosynthesis; lipid IV(A) biosynthesis; lipid IV(A) from (3R)-3-hydroxytetradecanoyl-[acyl-carrier-protein] and UDP-N-acetyl-alpha-D-glucosamine: step 3/6. In terms of biological role, catalyzes the N-acylation of UDP-3-O-(hydroxytetradecanoyl)glucosamine using 3-hydroxytetradecanoyl-ACP as the acyl donor. Is involved in the biosynthesis of lipid A, a phosphorylated glycolipid that anchors the lipopolysaccharide to the outer membrane of the cell. The chain is UDP-3-O-(3-hydroxymyristoyl)glucosamine N-acyltransferase from Pectobacterium atrosepticum (strain SCRI 1043 / ATCC BAA-672) (Erwinia carotovora subsp. atroseptica).